The sequence spans 156 residues: Protein eva-1 homolog A (156 aa).

Residues 40–60 (ALYFVSGVCIGLFLTLAALVM) traverse the membrane as a helical segment. Residues 79 to 100 (DRECSDSSDSEDGSEDTASDLS) form a disordered region. Acidic residues predominate over residues 84–96 (DSSDSEDGSEDTA). T110 carries the phosphothreonine modification. A Phosphoserine modification is found at S118.

It belongs to the EVA1 family.

It localises to the endoplasmic reticulum membrane. Its subcellular location is the lysosome membrane. In terms of biological role, acts as a regulator of programmed cell death, mediating both autophagy and apoptosis. The sequence is that of Protein eva-1 homolog A (Eva1a) from Mus musculus (Mouse).